Here is a 290-residue protein sequence, read N- to C-terminus: Bifunctional protein FolD (290 aa).

Residues 169–171, Ile-194, and Ile-235 each bind NADP(+); that span reads GAS.

It belongs to the tetrahydrofolate dehydrogenase/cyclohydrolase family. As to quaternary structure, homodimer.

The catalysed reaction is (6R)-5,10-methylene-5,6,7,8-tetrahydrofolate + NADP(+) = (6R)-5,10-methenyltetrahydrofolate + NADPH. It catalyses the reaction (6R)-5,10-methenyltetrahydrofolate + H2O = (6R)-10-formyltetrahydrofolate + H(+). Its pathway is one-carbon metabolism; tetrahydrofolate interconversion. Functionally, catalyzes the oxidation of 5,10-methylenetetrahydrofolate to 5,10-methenyltetrahydrofolate and then the hydrolysis of 5,10-methenyltetrahydrofolate to 10-formyltetrahydrofolate. The sequence is that of Bifunctional protein FolD from Helicobacter pylori (strain HPAG1).